The chain runs to 363 residues: UDP-N-acetylglucosamine--N-acetylmuramyl-(pentapeptide) pyrophosphoryl-undecaprenol N-acetylglucosamine transferase (363 aa).

Residues 21–23 (TGG), Asn-129, Arg-170, Ser-196, and Gln-290 contribute to the UDP-N-acetyl-alpha-D-glucosamine site.

It belongs to the glycosyltransferase 28 family. MurG subfamily.

The protein localises to the cell inner membrane. It catalyses the reaction di-trans,octa-cis-undecaprenyl diphospho-N-acetyl-alpha-D-muramoyl-L-alanyl-D-glutamyl-meso-2,6-diaminopimeloyl-D-alanyl-D-alanine + UDP-N-acetyl-alpha-D-glucosamine = di-trans,octa-cis-undecaprenyl diphospho-[N-acetyl-alpha-D-glucosaminyl-(1-&gt;4)]-N-acetyl-alpha-D-muramoyl-L-alanyl-D-glutamyl-meso-2,6-diaminopimeloyl-D-alanyl-D-alanine + UDP + H(+). It functions in the pathway cell wall biogenesis; peptidoglycan biosynthesis. Cell wall formation. Catalyzes the transfer of a GlcNAc subunit on undecaprenyl-pyrophosphoryl-MurNAc-pentapeptide (lipid intermediate I) to form undecaprenyl-pyrophosphoryl-MurNAc-(pentapeptide)GlcNAc (lipid intermediate II). This Synechococcus sp. (strain ATCC 27144 / PCC 6301 / SAUG 1402/1) (Anacystis nidulans) protein is UDP-N-acetylglucosamine--N-acetylmuramyl-(pentapeptide) pyrophosphoryl-undecaprenol N-acetylglucosamine transferase.